The sequence spans 300 residues: Nucleotide-binding protein TM1040_2438 (300 aa).

24 to 31 (GPSGAGRT) is an ATP binding site. A GTP-binding site is contributed by 71 to 74 (DPRN).

It belongs to the RapZ-like family.

Displays ATPase and GTPase activities. This chain is Nucleotide-binding protein TM1040_2438, found in Ruegeria sp. (strain TM1040) (Silicibacter sp.).